Here is a 37-residue protein sequence, read N- to C-terminus: Large ribosomal subunit protein bL36 (37 aa).

The protein belongs to the bacterial ribosomal protein bL36 family.

In Bordetella bronchiseptica (strain ATCC BAA-588 / NCTC 13252 / RB50) (Alcaligenes bronchisepticus), this protein is Large ribosomal subunit protein bL36.